The sequence spans 408 residues: UPF0761 membrane protein NMC0462 (408 aa).

Helical transmembrane passes span 43–63, 100–120, 139–159, 176–196, 210–230, and 248–268; these read LLAL…FPVF, LTAI…RTID, FLVY…GISF, WSGA…LWGL, AFVG…LFTW, and VPFF…GAVL.

It belongs to the UPF0761 family.

The protein resides in the cell inner membrane. The polypeptide is UPF0761 membrane protein NMC0462 (Neisseria meningitidis serogroup C / serotype 2a (strain ATCC 700532 / DSM 15464 / FAM18)).